The chain runs to 194 residues: ATP-dependent Clp protease proteolytic subunit (194 aa).

The Nucleophile role is filled by S98. H123 is a catalytic residue.

It belongs to the peptidase S14 family. As to quaternary structure, fourteen ClpP subunits assemble into 2 heptameric rings which stack back to back to give a disk-like structure with a central cavity, resembling the structure of eukaryotic proteasomes.

It is found in the cytoplasm. The catalysed reaction is Hydrolysis of proteins to small peptides in the presence of ATP and magnesium. alpha-casein is the usual test substrate. In the absence of ATP, only oligopeptides shorter than five residues are hydrolyzed (such as succinyl-Leu-Tyr-|-NHMec, and Leu-Tyr-Leu-|-Tyr-Trp, in which cleavage of the -Tyr-|-Leu- and -Tyr-|-Trp bonds also occurs).. Cleaves peptides in various proteins in a process that requires ATP hydrolysis. Has a chymotrypsin-like activity. Plays a major role in the degradation of misfolded proteins. The polypeptide is ATP-dependent Clp protease proteolytic subunit (Aliarcobacter butzleri (strain RM4018) (Arcobacter butzleri)).